Consider the following 355-residue polypeptide: 3-isopropylmalate dehydrogenase (355 aa).

Residues Arg-90, Arg-100, Arg-128, and Asp-222 each coordinate substrate. The Mg(2+) site is built by Asp-222, Asp-246, and Asp-250. NAD(+) is bound at residue 280–292; sequence GSAPDIAGKGIAN.

It belongs to the isocitrate and isopropylmalate dehydrogenases family. LeuB type 1 subfamily. As to quaternary structure, homodimer. The cofactor is Mg(2+). Requires Mn(2+) as cofactor.

Its subcellular location is the cytoplasm. It catalyses the reaction (2R,3S)-3-isopropylmalate + NAD(+) = 4-methyl-2-oxopentanoate + CO2 + NADH. Its pathway is amino-acid biosynthesis; L-leucine biosynthesis; L-leucine from 3-methyl-2-oxobutanoate: step 3/4. In terms of biological role, catalyzes the oxidation of 3-carboxy-2-hydroxy-4-methylpentanoate (3-isopropylmalate) to 3-carboxy-4-methyl-2-oxopentanoate. The product decarboxylates to 4-methyl-2 oxopentanoate. This chain is 3-isopropylmalate dehydrogenase, found in Burkholderia multivorans (strain ATCC 17616 / 249).